Here is a 359-residue protein sequence, read N- to C-terminus: Probable F-box protein At3g61730 (359 aa).

Basic and acidic residues-rich tracts occupy residues 1–14 (MKTR…DSRG) and 37–48 (QKNDIQREEDGR). The disordered stretch occupies residues 1 to 60 (MKTRSSDAEGDSRGKMIAPVGEGNGGRKRKLVQSNEQKNDIQREEDGRAKRRIVQSSDQK). One can recognise an F-box; degenerate domain in the interval 82 to 128 (QSRFSWYEQDIWTYISRFLDGKSLVKLGATNKWFYKIAMEDTVWRFA).

In terms of assembly, interacts with SKP1A. Expressed in flower buds, developing anthers, pollen grains, siliques, rosette leaves and roots. Detected at lower levels in open flowers, stems and cauline leaves. Expressed in young seedling in the hydathodes, shoot apical meristem, root tips and lateral root primordia.

Its subcellular location is the nucleus. Regulates tapetum degeneration and pollen maturation during anther development. This is Probable F-box protein At3g61730 (RMF) from Arabidopsis thaliana (Mouse-ear cress).